The primary structure comprises 233 residues: Germin-like protein 3-7 (233 aa).

Residues 1-35 (MSSSSSMECTGNMSAAPLLVLTVAVLAVLASTCAA) form the signal peptide. Cysteine 44 and cysteine 63 form a disulfide bridge. In terms of domain architecture, Cupin type-1 spans 77 to 225 (AGLAAAGSTD…SFQVDAEIIK (149 aa)). The Mn(2+) site is built by histidine 125, histidine 127, glutamate 132, and histidine 171. Asparagine 178 carries N-linked (GlcNAc...) asparagine glycosylation.

It belongs to the germin family. As to quaternary structure, oligomer (believed to be a pentamer but probably hexamer).

The protein resides in the secreted. It localises to the extracellular space. Its subcellular location is the apoplast. In terms of biological role, may play a role in plant defense. Probably has no oxalate oxidase activity even if the active site is conserved. The protein is Germin-like protein 3-7 (GER7) of Oryza sativa subsp. japonica (Rice).